The following is a 197-amino-acid chain: UPF0462 protein C4orf33 homolog (197 aa).

Belongs to the UPF0462 family.

This chain is UPF0462 protein C4orf33 homolog, found in Danio rerio (Zebrafish).